Reading from the N-terminus, the 488-residue chain is Glutamyl-tRNA(Gln) amidotransferase subunit A (488 aa).

Catalysis depends on charge relay system residues Lys-77 and Ser-152. The Acyl-ester intermediate role is filled by Ser-176.

This sequence belongs to the amidase family. GatA subfamily. In terms of assembly, heterotrimer of A, B and C subunits.

The enzyme catalyses L-glutamyl-tRNA(Gln) + L-glutamine + ATP + H2O = L-glutaminyl-tRNA(Gln) + L-glutamate + ADP + phosphate + H(+). Allows the formation of correctly charged Gln-tRNA(Gln) through the transamidation of misacylated Glu-tRNA(Gln) in organisms which lack glutaminyl-tRNA synthetase. The reaction takes place in the presence of glutamine and ATP through an activated gamma-phospho-Glu-tRNA(Gln). This chain is Glutamyl-tRNA(Gln) amidotransferase subunit A, found in Streptococcus equi subsp. zooepidemicus (strain H70).